Here is a 485-residue protein sequence, read N- to C-terminus: Adenosylhomocysteinase (485 aa).

Threonine 60, aspartate 146, and glutamate 208 together coordinate substrate. An NAD(+)-binding site is contributed by 209–211; sequence TTT. 2 residues coordinate substrate: lysine 238 and aspartate 242. NAD(+) is bound by residues asparagine 243, 272–277, glutamate 295, asparagine 330, 351–353, and asparagine 399; these read GYGDVG and IGH.

The protein belongs to the adenosylhomocysteinase family. It depends on NAD(+) as a cofactor.

It is found in the cytoplasm. The enzyme catalyses S-adenosyl-L-homocysteine + H2O = L-homocysteine + adenosine. Its pathway is amino-acid biosynthesis; L-homocysteine biosynthesis; L-homocysteine from S-adenosyl-L-homocysteine: step 1/1. In terms of biological role, may play a key role in the regulation of the intracellular concentration of adenosylhomocysteine. This is Adenosylhomocysteinase from Streptomyces avermitilis (strain ATCC 31267 / DSM 46492 / JCM 5070 / NBRC 14893 / NCIMB 12804 / NRRL 8165 / MA-4680).